Here is a 765-residue protein sequence, read N- to C-terminus: E3 ubiquitin-protein ligase SlrP (765 aa).

Positions 1–451 are interaction with target proteins; sequence MFNITNIQST…VDYQGPRVLF (451 aa). LRR repeat units lie at residues 200 to 219, 221 to 242, 243 to 262, 263 to 284, 285 to 305, 306 to 325, 326 to 346, 347 to 368, 369 to 389, and 390 to 410; these read QITT…ENLQ, NIKT…LPDT, IQEM…RLPS, ALQS…LPEE, LRYL…LPSG, ITHL…TLPP, GLKT…SLPP, ELQV…LPPT, ITTL…LPAA, and LQIM…LPHF. Positions 452-461 are linker; sequence AMGDFSIVRV. The segment at 462–765 is E3 ubiquitin-protein ligase catalytic domain; the sequence is TRPLHQAVQG…VSSLMSAYWR (304 aa). The NEL domain maps to 464-758; that stretch reads PLHQAVQGWL…NILLKKEVSS (295 aa). Cysteine 546 functions as the Glycyl thioester intermediate in the catalytic mechanism.

The protein belongs to the LRR-containing bacterial E3 ligase family. As to quaternary structure, interacts with host TXN. Post-translationally, ubiquitinated in the presence of host E1 ubiquitin-activating enzyme, E2 ubiquitin-conjugating enzyme and ubiquitin.

It localises to the secreted. It is found in the host cytoplasm. The enzyme catalyses S-ubiquitinyl-[E2 ubiquitin-conjugating enzyme]-L-cysteine + [acceptor protein]-L-lysine = [E2 ubiquitin-conjugating enzyme]-L-cysteine + N(6)-ubiquitinyl-[acceptor protein]-L-lysine.. With respect to regulation, binding to TXN is inhibited by hydrogen peroxide in vitro. In terms of biological role, effector proteins function to alter host cell physiology and promote bacterial survival in host tissues. This protein is an E3 ubiquitin ligase that interferes with host's ubiquitination pathway. Can ubiquitinate both ubiquitin and host TXN (thioredoxin). Leads to significant decrease of thioredoxin activity and increase of host cell death. This chain is E3 ubiquitin-protein ligase SlrP (slrP), found in Salmonella typhimurium (strain LT2 / SGSC1412 / ATCC 700720).